The sequence spans 409 residues: Elongation factor Tu, chloroplastic (409 aa).

Positions Lys-10–Thr-214 constitute a tr-type G domain. The tract at residues Gly-19–Thr-26 is G1. Gly-19–Thr-26 is a GTP binding site. Residue Thr-26 participates in Mg(2+) binding. Lys-57 is subject to N6-methyllysine. The segment at Gly-60 to Asn-64 is G2. Residues Asp-81 to Gly-84 are G3. Residues Asp-81–His-85 and Asn-136–Asp-139 each bind GTP. The tract at residues Asn-136–Asp-139 is G4. Residues Ser-174–Leu-176 are G5.

This sequence belongs to the TRAFAC class translation factor GTPase superfamily. Classic translation factor GTPase family. EF-Tu/EF-1A subfamily.

Its subcellular location is the plastid. The protein resides in the chloroplast. The enzyme catalyses GTP + H2O = GDP + phosphate + H(+). In terms of biological role, GTP hydrolase that promotes the GTP-dependent binding of aminoacyl-tRNA to the A-site of ribosomes during protein biosynthesis. This Euglena gracilis protein is Elongation factor Tu, chloroplastic (tufA).